The primary structure comprises 290 residues: Diaminopimelate epimerase (290 aa).

3 residues coordinate substrate: asparagine 17, glutamine 49, and asparagine 69. The active-site Proton donor is cysteine 78. Residues 79-80, asparagine 165, asparagine 198, and 216-217 contribute to the substrate site; these read GN and ER. The Proton acceptor role is filled by cysteine 225. 226 to 227 contacts substrate; sequence GS.

This sequence belongs to the diaminopimelate epimerase family. Homodimer.

The protein resides in the cytoplasm. It carries out the reaction (2S,6S)-2,6-diaminopimelate = meso-2,6-diaminopimelate. It participates in amino-acid biosynthesis; L-lysine biosynthesis via DAP pathway; DL-2,6-diaminopimelate from LL-2,6-diaminopimelate: step 1/1. Catalyzes the stereoinversion of LL-2,6-diaminopimelate (L,L-DAP) to meso-diaminopimelate (meso-DAP), a precursor of L-lysine and an essential component of the bacterial peptidoglycan. The protein is Diaminopimelate epimerase of Methylocella silvestris (strain DSM 15510 / CIP 108128 / LMG 27833 / NCIMB 13906 / BL2).